The following is a 120-amino-acid chain: uncharacterized protein (120 aa).

It to E.coli YiaW.

This is an uncharacterized protein from Escherichia coli (strain K12).